Consider the following 682-residue polypeptide: Activating transcription factor 7-interacting protein 2 (682 aa).

Residues Ser-120–Gln-148 are disordered. Residues Ser-137 to Gln-148 are compositionally biased toward polar residues. A coiled-coil region spans residues Glu-328–Val-378. Ser-416 carries the phosphoserine modification. Polar residues-rich tracts occupy residues Ile-418–Ser-451 and Glu-462–Asn-490. Disordered regions lie at residues Ile-418–Ala-491 and Asn-513–Pro-538. A phosphoserine mark is found at Ser-488 and Ser-521. Polar residues predominate over residues Lys-528–Pro-538. The Fibronectin type-III domain maps to Pro-575 to Asn-680.

It belongs to the MCAF family. In terms of assembly, interacts with MBD1, SETDB1 and SP1. Probably forms a complex with SETDB1 and MBD1.

Its subcellular location is the nucleus. Functionally, recruiter that couples transcriptional factors to general transcription apparatus and thereby modulates transcription regulation and chromatin formation. Can both act as an activator or a repressor depending on the context. Mediates MBD1-dependent transcriptional repression, probably by recruiting complexes containing SETDB1. The complex formed with MBD1 and SETDB1 represses transcription and probably couples DNA methylation and histone H3 'Lys-9' trimethylation (H3K9me3) activity. The protein is Activating transcription factor 7-interacting protein 2 (ATF7IP2) of Homo sapiens (Human).